The chain runs to 320 residues: Beta-carotene 3-hydroxylase, chloroplastic (320 aa).

The N-terminal 78 residues, 1 to 78 (METQFLVSGR…EKELRGKLVV (78 aa)), are a transit peptide targeting the chloroplast. A run of 2 helical transmembrane segments spans residues 118–138 (YLVA…LSVY) and 152–172 (LSEM…MEFW). Residues 165–292 (AAVGMEFWAR…KFNGVPYGLF (128 aa)) enclose the Fatty acid hydroxylase domain. The short motif at 177-182 (HEALWH) is the Histidine box-1 element. A Histidine box-2 motif is present at residues 189–193 (HESHH). The next 2 helical transmembrane spans lie at 204 to 224 (DIFA…GFFH) and 228 to 248 (IPGL…AYMF). Residues 250 to 255 (HDGLVH) carry the Histidine box-3 motif. A Histidine box-4 motif is present at residues 276–280 (HTLHH).

The protein belongs to the sterol desaturase family.

It localises to the plastid. It is found in the chloroplast membrane. It carries out the reaction all-trans-beta-carotene + 4 reduced [2Fe-2S]-[ferredoxin] + 2 O2 + 4 H(+) = all-trans-zeaxanthin + 4 oxidized [2Fe-2S]-[ferredoxin] + 2 H2O. In terms of biological role, nonheme diiron monooxygenase involved in the biosynthesis of xanthophylls. Specific for beta-ring hydroxylations of beta-carotene. Uses ferredoxin as an electron donor. In Gentiana lutea (Yellow gentian), this protein is Beta-carotene 3-hydroxylase, chloroplastic (BHY).